The chain runs to 721 residues: MRTAEESSGTVLHRLIQEQLRYGNPTDPTLLAIQQQALRGGSSGGGAGSPRSSLESLTQEESLSPQLSARQEPQGQEHQGDFQHSESPVCHLYQLHTEELPTYEEAKAHSQYLAYQRGQIGLHQGSLESPGGVGGAEQDDSMWDAKREHARSLSERLLQLSLERNCAHDNIPMSSSHSYPQLSNNHSDTVVNEQSVHQPDQRGPPPEYPFMVRSPGYMLSHSQEHGHYYNEPPPAFHSQHYRLFPTQPQAPRHNGLPTLTPAGQDVNVGGYSIPANNFQMEQLIKENERLKREVDSYSEKAARLQKLEQEIQRISEAYETLMKGSAKREALEKTMRNKLESEIKRLHDFNRDLRDRLETANKQRAAIEVEDKSRHAFAKLVEQNEDHLRERERLEKETQHLRASGEEWKRRREALEQALITAQTRNRQLEEELRRKRAYVEKVERMQSALAQLQAACEKREALELRLRTRLEQELKSLRAQQWQAQTQHASPGSYLDLNVSSLQQQLREREEQVLALEADITRWEQKYLEESTMRQFAMDAAATAAAQRDTTIINHSPRNSPNSSFNEDLPSPNHRHQEMENRIRALYAQLLEKDAIIKVMQQRSRREQGRPELQGLRPARSVPSINTVATASTTRAKGKSLSDDQTAVASLPPLPHLLAKIQCRDSSTQCDSEEPSCKAEPADVAVSAPEPSTASSSESTSLKTTQISSAVENDMVEILI.

Residues 35 to 84 (QQALRGGSSGGGAGSPRSSLESLTQEESLSPQLSARQEPQGQEHQGDFQH) form a disordered region. Residues 49-68 (SPRSSLESLTQEESLSPQLS) show a composition bias toward low complexity. The residue at position 103 (Tyr-103) is a Phosphotyrosine; by FGFR1. Positions 169-214 (DNIPMSSSHSYPQLSNNHSDTVVNEQSVHQPDQRGPPPEYPFMVRS) are disordered. Positions 172 to 198 (PMSSSHSYPQLSNNHSDTVVNEQSVHQ) are enriched in polar residues. Positions 275–531 (ANNFQMEQLI…TRWEQKYLEE (257 aa)) form a coiled coil. Residues 554–567 (INHSPRNSPNSSFN) are compositionally biased toward polar residues. 2 disordered regions span residues 554–575 (INHSPRNSPNSSFNEDLPSPNH) and 666–709 (DSST…TQIS). Low complexity predominate over residues 688–702 (SAPEPSTASSSESTS). A PDZ-binding motif is present at residues 718–721 (EILI).

It belongs to the angiomotin family. As to quaternary structure, interacts with SRC. Post-translationally, phosphorylation at Tyr-103 is necessary for efficient binding to SRC and synergistically functioning with SRC to activate the downstream MAPK pathway. In terms of tissue distribution, expressed in endothelial cells.

Its subcellular location is the recycling endosome. It localises to the cytoplasm. The protein resides in the cell projection. The protein localises to the podosome. It is found in the cell junction. Functionally, required for proper architecture of actin filaments and for cell movements during embryogenesis. Plays a role in the radial actin fiber architecture in skin epithelial cells, thereby maintains cell geometry, size and cell interconnectivity within the skin. Plays an important role in coupling actin fibers to cell junctions in endothelial cells and is therefore required for correct endothelial cell morphology and maintenance of dorsal aorta lumen expansion during embryogenesis. May further play a role in the polarity, proliferation and migration of endothelial cells, and therefore participates in angiogenesis. Inhibits the Wnt/beta-catenin signaling pathway, probably by recruiting CTNNB1 to recycling endosomes and hence preventing its translocation to the nucleus. Regulates the translocation of phosphorylated SRC to peripheral cell-matrix adhesion sites. Selectively promotes FGF-induced MAPK activation through SRC. The protein is Angiomotin-like 2a (amotl2a) of Danio rerio (Zebrafish).